A 494-amino-acid chain; its full sequence is MLRASATRFLSQAKNMNNSPRLFSSASAALQKFRAERDTFGDLQVPADRYWGAQTQRSLQNFDIGGPTERMPEPLIRAFGVLKKAAATVNMTYGLDPKVGEAIQKAADEVIDGSLIDHFPLVVWQTGSGTQTKMNVNEVISNRAIELLGGELGSKAPVHPNDHVNMSQSSNDTFPTAMHVAAVVEIHGRLIPALTTLRDALQAKSAEFEHIIKIGRTHLQDATPLTLGQEFSGYTQQLTYGIARVQGTLERLYNLAQGGTAVGTGLNTRKGFDAKVAEAIASITGLPFKTAPNKFEALAAHDALVEAHGALNTVACSLMKIANDIRYLGSGPRCGLGELSLPENEPGSSIMPGKVNPTQCEAMTMVCAQVMGNNTAISVAGSNGQFELNVFKPVMIKNLIQSIRLISDASISFTKNCVVGIEANEKKISSIMNESLMLVTALNPHIGYDKAAKCAKKAHKEGTTLKEAALSLGYLTSEEFDQWVRPEDMISAKD.

The N-terminal 15 residues, 1–15, are a transit peptide targeting the mitochondrion; it reads MLRASATRFLSQAKN. Substrate is bound by residues 128–130, 159–162, 169–171, and T217; these read SGT, HPND, and SSN. The active-site Proton donor/acceptor is H218. The active site involves S348. Residues S349 and 354 to 356 contribute to the substrate site; that span reads KVN.

Belongs to the class-II fumarase/aspartase family. Fumarase subfamily. As to quaternary structure, homotetramer.

Its subcellular location is the mitochondrion matrix. The protein localises to the cytoplasm. The protein resides in the nucleus. It carries out the reaction (S)-malate = fumarate + H2O. It participates in carbohydrate metabolism; tricarboxylic acid cycle; (S)-malate from fumarate: step 1/1. In terms of biological role, catalyzes the reversible stereospecific interconversion of fumarate to L-malate. In mitochondrion, catalyzes the hydration of fumarate to L-malate in the tricarboxylic acid (TCA) cycle to facilitate a transition step in the production of energy in the form of NADH. In cytoplasm and nucleus, involved in DNA repair in response to DNA damage: following DNA double-strand breaks (DSBs), translocates from the cytosol to the nucleus and promotes DNA repair by catalyzing the dehydration of L-malate to fumarate. The protein is Fumarate hydratase, mitochondrial of Rhizopus oryzae (Mucormycosis agent).